Reading from the N-terminus, the 350-residue chain is 3-isopropylmalate dehydrogenase (350 aa).

An NAD(+)-binding site is contributed by 71-84 (GPKWADAPRHLRPE). Residues Arg91, Arg101, Arg129, and Asp220 each contribute to the substrate site. The Mg(2+) site is built by Asp220, Asp244, and Asp248. Residue 279–291 (GSAPDIAGKGLAN) coordinates NAD(+).

This sequence belongs to the isocitrate and isopropylmalate dehydrogenases family. LeuB type 1 subfamily. Homodimer. Mg(2+) is required as a cofactor. Requires Mn(2+) as cofactor.

It localises to the cytoplasm. The catalysed reaction is (2R,3S)-3-isopropylmalate + NAD(+) = 4-methyl-2-oxopentanoate + CO2 + NADH. Its pathway is amino-acid biosynthesis; L-leucine biosynthesis; L-leucine from 3-methyl-2-oxobutanoate: step 3/4. Catalyzes the oxidation of 3-carboxy-2-hydroxy-4-methylpentanoate (3-isopropylmalate) to 3-carboxy-4-methyl-2-oxopentanoate. The product decarboxylates to 4-methyl-2 oxopentanoate. This Caulobacter vibrioides (strain ATCC 19089 / CIP 103742 / CB 15) (Caulobacter crescentus) protein is 3-isopropylmalate dehydrogenase.